Here is a 161-residue protein sequence, read N- to C-terminus: Cyclic pyranopterin monophosphate synthase (161 aa).

Residues Leu-78–His-80 and Met-116–Glu-117 each bind substrate. Residue Asp-131 is part of the active site.

Belongs to the MoaC family. As to quaternary structure, homohexamer; trimer of dimers.

The enzyme catalyses (8S)-3',8-cyclo-7,8-dihydroguanosine 5'-triphosphate = cyclic pyranopterin phosphate + diphosphate. The protein operates within cofactor biosynthesis; molybdopterin biosynthesis. Catalyzes the conversion of (8S)-3',8-cyclo-7,8-dihydroguanosine 5'-triphosphate to cyclic pyranopterin monophosphate (cPMP). In Bordetella parapertussis (strain 12822 / ATCC BAA-587 / NCTC 13253), this protein is Cyclic pyranopterin monophosphate synthase.